Reading from the N-terminus, the 884-residue chain is Androgen receptor (884 aa).

Positions 1-522 (MEVQLGLGRV…PIDYYFPPQK (522 aa)) are modulating. The segment at 1–551 (MEVQLGLGRV…GSCKVFFKRA (551 aa)) is interaction with ZNF318. Disordered stretches follow at residues 33-145 (VIQN…TLSL) and 174-207 (QQQQ…YLGG). Composition is skewed to low complexity over residues 55–79 (QQQQ…PQAQ) and 174–196 (QQQQ…AAGA). At serine 61 the chain carries Phosphoserine; by CDK9. At serine 75 the chain carries Phosphoserine. Residues 197–207 (PTSSKDSYLGG) show a composition bias toward polar residues. Tyrosine 204 bears the Phosphotyrosine; by CSK mark. Phosphoserine is present on serine 237. Tyrosine 248 is modified (phosphotyrosine; by CSK and TNK2). The segment at 275-294 (DDSADKGTEEPAEYTPFKGS) is disordered. Phosphotyrosine; by CSK occurs at positions 288, 327, 338, and 343. Tyrosine 344 is subject to Phosphotyrosine; by CSK and TNK2. A Glycyl lysine isopeptide (Lys-Gly) (interchain with G-Cter in SUMO) cross-link involves residue lysine 367. A Phosphotyrosine; by CSK modification is found at tyrosine 374. A Glycyl lysine isopeptide (Lys-Gly) (interchain with G-Cter in SUMO) cross-link involves residue lysine 485. A phosphotyrosine; by CSK mark is found at tyrosine 499 and tyrosine 516. Residues 516–883 (YYFPPQKTCL…GKVKPIYFHT (368 aa)) form an interaction with LPXN region. The segment at residues 523–596 (TCLICGDEAS…AGMTLGARKL (74 aa)) is a DNA-binding region (nuclear receptor). 2 NR C4-type zinc fingers span residues 524–544 (CLIC…CGSC) and 560–584 (CASR…LRKC). The tract at residues 536-626 (YGALTCGSCK…TEESSQKLTV (91 aa)) is interaction with HIPK3. Positions 556–883 (QKYLCASRND…GKVKPIYFHT (328 aa)) are interaction with CCAR1. The segment at 589 to 883 (MTLGARKLKK…GKVKPIYFHT (295 aa)) is interaction with KAT7. Serine 615 is modified (phosphoserine; by STK4/MST1). The NR LBD domain occupies 633–864 (ECQPIFLNVL…DFPEMMAEII (232 aa)). 17beta-hydroxy-5alpha-androstan-3-one contacts are provided by asparagine 670 and arginine 717. Glycyl lysine isopeptide (Lys-Gly) (interchain with G-Cter in ubiquitin) cross-links involve residues lysine 810 and lysine 812. Position 842 (threonine 842) interacts with 17beta-hydroxy-5alpha-androstan-3-one. Tyrosine 880 is modified (phosphotyrosine; by CSK).

Belongs to the nuclear hormone receptor family. NR3 subfamily. Binds DNA as a homodimer. Part of a ternary complex containing AR, EFCAB6/DJBP and PARK7. Interacts with HIPK3 and NR0B2 in the presence of androgen. The ligand binding domain interacts with KAT7/HBO1 in the presence of dihydrotestosterone. Interacts with EFCAB6/DJBP, PQBP1, RANBP9, RBAK, SPDEF, SRA1, TGFB1I1 and RREB1. Interacts with ZMIZ1/ZIMP10 and ZMIZ2/ZMIP7 which both enhance its transactivation activity. Interacts with SLC30A9 and RAD54L2/ARIP4. Interacts with MACROD1 (via macro domain). Interacts via the ligand-binding domain with LXXLL and FXXLF motifs from NCOA1, NCOA2, NCOA3 and MAGEA11. Interacts (via nuclear receptor DNA binding domain and nuclear receptor ligand binding domain) with NCOA4. The AR N-terminal poly-Gln region binds Ran resulting in enhancement of AR-mediated transactivation. Ran-binding decreases as the poly-Gln length increases. Interacts with HIP1 (via coiled coil domain). Interacts (via ligand-binding domain) with TRIM68. Interacts with TNK2. Interacts with USP26. Interacts with RNF6. Interacts (regulated by RNF6 probably through polyubiquitination) with RNF14; regulates AR transcriptional activity. Interacts with PRMT2 and TRIM24. Interacts with RACK1. Interacts with RANBP10; this interaction enhances dihydrotestosterone-induced AR transcriptional activity. Interacts with PRPF6 in a hormone-independent way; this interaction enhances dihydrotestosterone-induced AR transcriptional activity. Interacts with STK4/MST1. Interacts with ZIPK/DAPK3. Interacts with LPXN. Interacts with MAK. Part of a complex containing AR, MAK and NCOA3. Interacts with CRY1. Interacts with CCAR1 and GATA2. Interacts with ZNF318. Interacts with BUD31. Interacts with ARID4A. Interacts with ARID4B. Interacts (via NR LBD domain) with ZBTB7A; the interaction is direct and androgen-dependent. Interacts with NCOR1. Interacts with NCOR2. Interacts with CRY2 in a ligand-dependent manner. Post-translationally, phosphorylated in prostate cancer cells in response to several growth factors including EGF. Phosphorylation is induced by c-Src kinase (CSK). Tyr-499 is one of the major phosphorylation sites and an increase in phosphorylation and Src kinase activity is associated with prostate cancer progression. Phosphorylation by TNK2 enhances the DNA-binding and transcriptional activity. Phosphorylation at Ser-61 by CDK9 regulates AR promoter selectivity and cell growth. Sumoylated on Lys-367 (major) and Lys-485. Ubiquitinated. Deubiquitinated by USP26. 'Lys-6' and 'Lys-27'-linked polyubiquitination by RNF6 modulates AR transcriptional activity and specificity. In terms of processing, palmitoylated by ZDHHC7 and ZDHHC21. Palmitoylation is required for plasma membrane targeting and for rapid intracellular signaling via ERK and AKT kinases and cAMP generation.

Its subcellular location is the nucleus. It localises to the cytoplasm. Its function is as follows. Steroid hormone receptors are ligand-activated transcription factors that regulate eukaryotic gene expression and affect cellular proliferation and differentiation in target tissues. Transcription factor activity is modulated by bound coactivator and corepressor proteins like ZBTB7A that recruits NCOR1 and NCOR2 to the androgen response elements/ARE on target genes, negatively regulating androgen receptor signaling and androgen-induced cell proliferation. Transcription activation is also down-regulated by NR0B2. Activated, but not phosphorylated, by HIPK3 and ZIPK/DAPK3. The protein is Androgen receptor (AR) of Eulemur fulvus collaris (Collared brown lemur).